The primary structure comprises 391 residues: Phosphoglycerate kinase (391 aa).

Substrate-binding positions include 21–23 (DLN), Arg-36, 59–62 (HLGR), Arg-113, and Arg-146. Residues Lys-197, Glu-319, and 345–348 (GGDT) contribute to the ATP site.

This sequence belongs to the phosphoglycerate kinase family. As to quaternary structure, monomer.

It localises to the cytoplasm. The catalysed reaction is (2R)-3-phosphoglycerate + ATP = (2R)-3-phospho-glyceroyl phosphate + ADP. It functions in the pathway carbohydrate degradation; glycolysis; pyruvate from D-glyceraldehyde 3-phosphate: step 2/5. In Colwellia psychrerythraea (strain 34H / ATCC BAA-681) (Vibrio psychroerythus), this protein is Phosphoglycerate kinase.